The primary structure comprises 393 residues: Chalcone synthase DII (393 aa).

The active site involves Cys164.

Belongs to the thiolase-like superfamily. Chalcone/stilbene synthases family.

It carries out the reaction (E)-4-coumaroyl-CoA + 3 malonyl-CoA + 3 H(+) = 2',4,4',6'-tetrahydroxychalcone + 3 CO2 + 4 CoA. Its pathway is secondary metabolite biosynthesis; flavonoid biosynthesis. In terms of biological role, the primary product of this enzyme is 4,2',4',6'-tetrahydroxychalcone (also termed naringenin-chalcone or chalcone) which can under specific conditions spontaneously isomerize into naringenin. This Ipomoea batatas (Sweet potato) protein is Chalcone synthase DII (CHS-DII).